The sequence spans 209 residues: Thymidylate kinase (209 aa).

10 to 17 (GIDGCGKS) serves as a coordination point for ATP.

It belongs to the thymidylate kinase family.

It carries out the reaction dTMP + ATP = dTDP + ADP. Phosphorylation of dTMP to form dTDP in both de novo and salvage pathways of dTTP synthesis. This chain is Thymidylate kinase, found in Synechococcus sp. (strain CC9902).